The chain runs to 22 residues: Mu-conotoxin TIIIA (22 aa).

3 disulfide bridges follow: Cys4–Cys16, Cys5–Cys21, and Cys11–Cys22. 2 positions are modified to 4-hydroxyproline: Pro8 and Pro18. Cys22 is modified (cysteine amide).

This sequence belongs to the conotoxin M superfamily. As to expression, expressed by the venom duct.

It is found in the secreted. In terms of biological role, mu-conotoxins block voltage-gated sodium channels (Nav). This synthetic toxin reversibly and potently blocks rNav1.4/SCN4A (IC(50) is 9 nM) and rNav1.2/SCN2A (IC(50) is 40 nM). It also moderately blocks rNav1.1/SCN1A, rNav1.3/SCN3A, and rNav1.6/SCN8A. The block of SCN1A and SCN2A is modified when beta-subunits are coexpressed with alpha subunits. Hence, blocks of channels containing beta-1 and beta-3 subunits are more potent (compared to channels without beta subunits), whereas blocks of channels containing beta-2 and beta-4 subunits are less potent (compared to channels without beta subunits). The protein is Mu-conotoxin TIIIA of Conus tulipa (Fish-hunting cone snail).